Consider the following 273-residue polypeptide: Undecaprenyl-diphosphatase (273 aa).

8 consecutive transmembrane segments (helical) span residues 4 to 24 (MELW…FAPV), 48 to 68 (AANT…VVVF), 89 to 109 (LNLI…VLFE), 116 to 136 (LFST…MIAA), 152 to 172 (ITYK…WPGF), 193 to 213 (ADFT…LSLL), 222 to 242 (ADIP…LLAI), and 252 to 272 (IRLV…YFLY).

This sequence belongs to the UppP family.

It is found in the cell membrane. It catalyses the reaction di-trans,octa-cis-undecaprenyl diphosphate + H2O = di-trans,octa-cis-undecaprenyl phosphate + phosphate + H(+). Functionally, catalyzes the dephosphorylation of undecaprenyl diphosphate (UPP). Confers resistance to bacitracin. This chain is Undecaprenyl-diphosphatase, found in Geobacillus kaustophilus (strain HTA426).